The sequence spans 498 residues: Cytochrome P450 monooxygenase ltmP (498 aa).

The N-terminal stretch at 1 to 21 is a signal peptide; it reads MLMLHAVPVGICLLLWYVVYG. Asn420 carries N-linked (GlcNAc...) asparagine glycosylation. Cys435 lines the heme pocket.

Belongs to the cytochrome P450 family. Heme serves as cofactor.

The protein operates within secondary metabolite biosynthesis. In terms of biological role, cytochrome P450 monooxygenase; part of the gene clusters that mediates the biosynthesis of lolitrems, indole-diterpene mycotoxins that are potent tremorgens in mammals, and are synthesized by clavicipitaceous fungal endophytes in association with their grass hosts. The geranylgeranyl diphosphate (GGPP) synthase ltmG is proposed to catalyze the first step in lolitrem biosynthesis. LtmG catalyzes a series of iterative condensations of isopentenyl diphosphate (IPP) with dimethylallyl diphosphate (DMAPP), geranyl diphosphate (GPP), and farnesyl diphosphate (FPP), to form GGPP. GGPP then condenses with indole-3-glycerol phosphate to form 3-geranylgeranylindole, an acyclic intermediate, to be incorporated into paxilline. Either ltmG or ltmC could be responsible for this step, as both are putative prenyl transferases. The FAD-dependent monooxygenase ltmM then catalyzes the epoxidation of the two terminal alkenes of the geranylgeranyl moiety, which is subsequently cyclized by ltmB, to paspaline. The cytochrome P450 monooxygenases ltmQ and ltmP can sequentially oxidize paspaline to terpendole E and terpendole F. Alternatively, ltmP converts paspaline to an intermediate which is oxidized by ltmQ to terpendole F. LtmF, ltmK, ltmE and ltmJ appear to be unique to the epichloe endophytes. The prenyltransferase ltmF is involved in the 27-hydroxyl-O-prenylation. The cytochrome P450 monooxygenase ltmK is required for the oxidative acetal ring formation. The multi-functional prenyltransferase ltmE is required for C20- and C21-prenylations of the indole ring of paspalanes and acts together with the cytochrome P450 monooxygenase ltmJ to yield lolitremanes by multiple oxidations and ring closures. The stereoisomer pairs of lolitriol and lolitrem N or lolitrem B and lolitrem F may be attributed to variations in the way in which ring closure can occur under the action of ltmJ. While the major product of this pathway is lolitrem B, the prenyl transferases and cytochrome P450 monooxygenases identified in this pathway have a remarkable versatility in their regio- and stereo-specificities to generate a diverse range of metabolites that are products of a metabolic grid rather than a linear pathway. In Epichloe festucae var. lolii (Neotyphodium lolii), this protein is Cytochrome P450 monooxygenase ltmP.